We begin with the raw amino-acid sequence, 598 residues long: Elongation factor 4 (598 aa).

The tr-type G domain occupies 2 to 183 (KHIRNFCIIA…AIIEKIPHPK (182 aa)). GTP-binding positions include 14-19 (DHGKST) and 130-133 (NKVD).

The protein belongs to the TRAFAC class translation factor GTPase superfamily. Classic translation factor GTPase family. LepA subfamily.

Its subcellular location is the cell inner membrane. The enzyme catalyses GTP + H2O = GDP + phosphate + H(+). Functionally, required for accurate and efficient protein synthesis under certain stress conditions. May act as a fidelity factor of the translation reaction, by catalyzing a one-codon backward translocation of tRNAs on improperly translocated ribosomes. Back-translocation proceeds from a post-translocation (POST) complex to a pre-translocation (PRE) complex, thus giving elongation factor G a second chance to translocate the tRNAs correctly. Binds to ribosomes in a GTP-dependent manner. This is Elongation factor 4 from Flavobacterium psychrophilum (strain ATCC 49511 / DSM 21280 / CIP 103535 / JIP02/86).